The primary structure comprises 603 residues: MSAAVTAGKLARAPADPGKAGVPGVAAPGAPAAAPPAKEIPEVLVDPRSRRRYVRGRFLGKGGFAKCFEISDADTKEVFAGKIVPKSLLLKPHQREKMSMEISIHRSLAHQHVVGFHGFFEDNDFVFVVLELCRRRSLLELHKRRKALTEPEARYYLRQIVLGCQYLHRNRVIHRDLKLGNLFLNEDLEVKIGDFGLATKVEYDGERKKTLCGTPNYIAPEVLSKKGHSFEVDVWSIGCIMYTLLVGKPPFETSCLKETYLRIKKNEYSIPKHINPVAASLIQKMLQTDPTARPTINELLNDEFFTSGYIPARLPITCLTIPPRFSIAPSSLDPSNRKPLTVLNKGLENPLPERPREKEEPVVRETGEVVDCHLSDMLQQLHSVNASKPSERGLVRQEEAEDPACIPIFWVSKWVDYSDKYGLGYQLCDNSVGVLFNDSTRLILYNDGDSLQYIERDGTESYLTVSSHPNSLMKKITLLKYFRNYMSEHLLKAGANITPREGDELARLPYLRTWFRTRSAIILHLSNGSVQINFFQDHTKLILCPLMAAVTYIDEKRDFRTYRLSLLEEYGCCKELASRLRYARTMVDKLLSSRSASNRLKAS.

Residues 1 to 35 (MSAAVTAGKLARAPADPGKAGVPGVAAPGAPAAAP) are disordered. S2 carries the post-translational modification N-acetylserine. Phosphothreonine is present on T6. Positions 13–35 (APADPGKAGVPGVAAPGAPAAAP) are enriched in low complexity. K19 participates in a covalent cross-link: Glycyl lysine isopeptide (Lys-Gly) (interchain with G-Cter in ubiquitin). In terms of domain architecture, Protein kinase spans 53–305 (YVRGRFLGKG…INELLNDEFF (253 aa)). Residues 59–67 (LGKGGFAKC) and K82 each bind ATP. At S103 the chain carries Phosphoserine. E131 contributes to the ATP binding site. S137 carries the post-translational modification Phosphoserine. D176 (proton acceptor) is an active-site residue. Residues 178–181 (KLGN) and D194 each bind ATP. Positions 194-221 (DFGLATKVEYDGERKKTLCGTPNYIAPE) are activation loop. At T210 the chain carries Phosphothreonine; by AURKA. T214 is modified (phosphothreonine). S269 carries the post-translational modification Phosphoserine; by autocatalysis. Position 335 is a phosphoserine (S335). Residues 337-340 (RKPL) carry the D-box that targets the protein for proteasomal degradation in anaphase motif. Residue K338 forms a Glycyl lysine isopeptide (Lys-Gly) (interchain with G-Cter in SUMO2) linkage. Residues 338-364 (KPLTVLNKGLENPLPERPREKEEPVVR) are disordered. Over residues 351-364 (LPERPREKEEPVVR) the composition is skewed to basic and acidic residues. S375 and S450 each carry phosphoserine. Residues 410–488 (WVSKWVDYSD…LKYFRNYMSE (79 aa)) enclose the POLO box 1 domain. A Glycyl lysine isopeptide (Lys-Gly) (interchain with G-Cter in ubiquitin) cross-link involves residue K492. Residues 493–507 (AGANITPREGDELAR) are linker. Position 498 is a phosphothreonine (T498). The POLO box 2 domain occupies 510-592 (YLRTWFRTRS…ARTMVDKLLS (83 aa)). Positions 538 to 540 (HTK) are important for interaction with phosphorylated proteins.

Belongs to the protein kinase superfamily. Ser/Thr protein kinase family. CDC5/Polo subfamily. As to quaternary structure, interacts with CEP170. Interacts with EVI5. Interacts with FAM29A. Interacts with SLX4/BTBD12. Interacts with TTDN1. Interacts (via POLO-box domain) with the phosphorylated form of BUB1, CDC25C and CENPU. Interacts with KIF2A. Interacts with CYLD. Part of an astrin (SPAG5)-kinastrin (SKAP) complex containing KNSTRN, SPAG5, PLK1, DYNLL1 and SGO2. Interacts with BIRC6/bruce. Interacts with CDK1-phosphorylated FRY; this interaction occurs in mitotic cells, but not in interphase cells. FRY interaction facilitates AURKA-mediated PLK1 phosphorylation. Interacts with CDK1-phosphorylated DCTN6 during mitotic prometaphase; the interaction facilitates recruitment to kinetochores. Interacts with CEP68; the interaction phosphorylates CEP68. Interacts (via POLO-box domain) with DCTN1. Interacts with CEP20 in later G1, S, G2 and M phases of the cell cycle; this interaction recruits PLK1 to centrosomes, a step required for S phase progression. Interacts with KLHL22. Interacts (via POLO box domains) with NEDD9/HEF1 (via C-terminus). Interacts with FIRRM (via N-terminus region); required for maintaining, but not activating, PLK1 kinase activity. Interacts with FZR1. Interacts with SKA3; the interaction promotes the stability of PLK1; the interaction promotes the stability of PLK1. Interacts with the MTMR3:MTMR4 heterooligomer; brings CEP55 and PLK1 together during early mitosis, regulating the phosphorylation of CEP55 by PLK1 and its recruitment to the midbody where it can mediate cell abscission. In terms of processing, catalytic activity is enhanced by phosphorylation of Thr-210. Phosphorylation at Thr-210 is first detected on centrosomes in the G2 phase of the cell cycle, peaks in prometaphase and gradually disappears from centrosomes during anaphase. Dephosphorylation at Thr-210 at centrosomes is probably mediated by protein phosphatase 1C (PP1C), via interaction with PPP1R12A/MYPT1. Autophosphorylation and phosphorylation of Ser-137 may not be significant for the activation of PLK1 during mitosis, but may enhance catalytic activity during recovery after DNA damage checkpoint. Phosphorylated in vitro by STK10. Ubiquitinated by the anaphase promoting complex/cyclosome (APC/C) in anaphase and following DNA damage, leading to its degradation by the proteasome. Ubiquitination is mediated via its interaction with FZR1/CDH1. Ubiquitination and subsequent degradation prevents entry into mitosis and is essential to maintain an efficient G2 DNA damage checkpoint. Monoubiquitination at Lys-492 by the BCR(KLHL22) ubiquitin ligase complex does not lead to degradation: it promotes PLK1 dissociation from phosphoreceptor proteins and subsequent removal from kinetochores, allowing silencing of the spindle assembly checkpoint (SAC) and chromosome segregation. Placenta and colon.

It is found in the nucleus. The protein localises to the chromosome. It localises to the centromere. Its subcellular location is the kinetochore. The protein resides in the cytoplasm. It is found in the cytoskeleton. The protein localises to the microtubule organizing center. It localises to the centrosome. Its subcellular location is the spindle. The protein resides in the midbody. It catalyses the reaction L-seryl-[protein] + ATP = O-phospho-L-seryl-[protein] + ADP + H(+). It carries out the reaction L-threonyl-[protein] + ATP = O-phospho-L-threonyl-[protein] + ADP + H(+). With respect to regulation, activated by phosphorylation of Thr-210 by AURKA; phosphorylation by AURKA is enhanced by BORA. Once activated, activity is stimulated by binding target proteins. Binding of target proteins has no effect on the non-activated kinase. Several inhibitors targeting PLKs are currently in development and are under investigation in a growing number of clinical trials, such as BI 2536, an ATP-competitive PLK1 inhibitor or BI 6727, a dihydropteridinone that specifically inhibits the catalytic activity of PLK1. Serine/threonine-protein kinase that performs several important functions throughout M phase of the cell cycle, including the regulation of centrosome maturation and spindle assembly, the removal of cohesins from chromosome arms, the inactivation of anaphase-promoting complex/cyclosome (APC/C) inhibitors, and the regulation of mitotic exit and cytokinesis. Polo-like kinase proteins act by binding and phosphorylating proteins that are already phosphorylated on a specific motif recognized by the POLO box domains. Phosphorylates BORA, BUB1B/BUBR1, CCNB1, CDC25C, CEP55, ECT2, ERCC6L, FBXO5/EMI1, FOXM1, KIF20A/MKLP2, CENPU, NEDD1, NINL, NPM1, NUDC, PKMYT1/MYT1, KIZ, MRE11, PPP1R12A/MYPT1, POLQ, PRC1, RACGAP1/CYK4, RAD51, RHNO1, SGO1, STAG2/SA2, TEX14, TOPORS, p73/TP73, TPT1, WEE1 and HNRNPU. Plays a key role in centrosome functions and the assembly of bipolar spindles by phosphorylating KIZ, NEDD1 and NINL. NEDD1 phosphorylation promotes subsequent targeting of the gamma-tubulin ring complex (gTuRC) to the centrosome, an important step for spindle formation. Phosphorylation of NINL component of the centrosome leads to NINL dissociation from other centrosomal proteins. Involved in mitosis exit and cytokinesis by phosphorylating CEP55, ECT2, KIF20A/MKLP2, CENPU, PRC1 and RACGAP1. Recruited at the central spindle by phosphorylating and docking PRC1 and KIF20A/MKLP2; creates its own docking sites on PRC1 and KIF20A/MKLP2 by mediating phosphorylation of sites subsequently recognized by the POLO box domains. Phosphorylates RACGAP1, thereby creating a docking site for the Rho GTP exchange factor ECT2 that is essential for the cleavage furrow formation. Promotes the central spindle recruitment of ECT2. Plays a central role in G2/M transition of mitotic cell cycle by phosphorylating CCNB1, CDC25C, FOXM1, CENPU, PKMYT1/MYT1, PPP1R12A/MYPT1 and WEE1. Part of a regulatory circuit that promotes the activation of CDK1 by phosphorylating the positive regulator CDC25C and inhibiting the negative regulators WEE1 and PKMYT1/MYT1. Also acts by mediating phosphorylation of cyclin-B1 (CCNB1) on centrosomes in prophase. Phosphorylates FOXM1, a key mitotic transcription regulator, leading to enhance FOXM1 transcriptional activity. Involved in kinetochore functions and sister chromatid cohesion by phosphorylating BUB1B/BUBR1, FBXO5/EMI1 and STAG2/SA2. PLK1 is high on non-attached kinetochores suggesting a role of PLK1 in kinetochore attachment or in spindle assembly checkpoint (SAC) regulation. Required for kinetochore localization of BUB1B. Regulates the dissociation of cohesin from chromosomes by phosphorylating cohesin subunits such as STAG2/SA2. Phosphorylates SGO1: required for spindle pole localization of isoform 3 of SGO1 and plays a role in regulating its centriole cohesion function. Mediates phosphorylation of FBXO5/EMI1, a negative regulator of the APC/C complex during prophase, leading to FBXO5/EMI1 ubiquitination and degradation by the proteasome. Acts as a negative regulator of p53 family members: phosphorylates TOPORS, leading to inhibit the sumoylation of p53/TP53 and simultaneously enhance the ubiquitination and subsequent degradation of p53/TP53. Phosphorylates the transactivation domain of the transcription factor p73/TP73, leading to inhibit p73/TP73-mediated transcriptional activation and pro-apoptotic functions. Phosphorylates BORA, and thereby promotes the degradation of BORA. Contributes to the regulation of AURKA function. Also required for recovery after DNA damage checkpoint and entry into mitosis. Phosphorylates MISP, leading to stabilization of cortical and astral microtubule attachments required for proper spindle positioning. Together with MEIKIN, acts as a regulator of kinetochore function during meiosis I: required both for mono-orientation of kinetochores on sister chromosomes and protection of centromeric cohesin from separase-mediated cleavage. Phosphorylates CEP68 and is required for its degradation. Regulates nuclear envelope breakdown during prophase by phosphorylating DCTN1 resulting in its localization in the nuclear envelope. Phosphorylates the heat shock transcription factor HSF1, promoting HSF1 nuclear translocation upon heat shock. Phosphorylates HSF1 also in the early mitotic period; this phosphorylation regulates HSF1 localization to the spindle pole, the recruitment of the SCF(BTRC) ubiquitin ligase complex induicing HSF1 degradation, and hence mitotic progression. Regulates mitotic progression by phosphorylating RIOK2. Through the phosphorylation of DZIP1 regulates the localization during mitosis of the BBSome, a ciliary protein complex involved in cilium biogenesis. Regulates DNA repair during mitosis by mediating phosphorylation of POLQ and RHNO1, thereby promoting POLQ recruitment to DNA damage sites. Phosphorylates ATXN10 which may play a role in the regulation of cytokinesis and may stimulate the proteasome-mediated degradation of ATXN10. The protein is Serine/threonine-protein kinase PLK1 (PLK1) of Homo sapiens (Human).